A 67-amino-acid polypeptide reads, in one-letter code: uncharacterized protein (67 aa).

2 consecutive transmembrane segments (helical) span residues 10–32 (NLSHVLALFLVSFILMAPYTAFI) and 44–66 (ATLTGIVAGILSNPGLFAYMGQW).

The protein localises to the cell membrane. This is an uncharacterized protein from Archaeoglobus fulgidus (strain ATCC 49558 / DSM 4304 / JCM 9628 / NBRC 100126 / VC-16).